Consider the following 196-residue polypeptide: Mediator of RNA polymerase II transcription subunit 21 (196 aa).

The disordered stretch occupies residues 52 to 111; that stretch reads KIPKNASTPPVPASAPQAAQSQSQASPPPPDTANPQTGGQHADQQQQSPDGEGLPAPDSP. Composition is skewed to low complexity over residues 65–76 and 87–98; these read SAPQAAQSQSQA and QTGGQHADQQQQ. Positions 144–174 form a coiled coil; sequence SSEAEQERRIRELEGELRIVEGVREERRREL.

It belongs to the Mediator complex subunit 21 family. As to quaternary structure, component of the Mediator complex.

The protein localises to the nucleus. Its function is as follows. Component of the Mediator complex, a coactivator involved in the regulated transcription of nearly all RNA polymerase II-dependent genes. Mediator functions as a bridge to convey information from gene-specific regulatory proteins to the basal RNA polymerase II transcription machinery. Mediator is recruited to promoters by direct interactions with regulatory proteins and serves as a scaffold for the assembly of a functional preinitiation complex with RNA polymerase II and the general transcription factors. In Aspergillus niger (strain ATCC MYA-4892 / CBS 513.88 / FGSC A1513), this protein is Mediator of RNA polymerase II transcription subunit 21 (srb7).